The sequence spans 602 residues: Na(+)/dicarboxylate cotransporter 3 (602 aa).

The Cytoplasmic segment spans residues 1-16 (MAALAAAAKKVWSARR). The helical transmembrane segment at 17-37 (LLVLLFTPLALLPVVFALPPK) threads the bilayer. Residues 38 to 55 (EGRCLFVILLMAVYWCTE) lie on the Extracellular side of the membrane. Residues 56-76 (ALPLSVTALLPIVLFPFMGIL) form a helical membrane-spanning segment. Residues 77-82 (PSNKVC) lie on the Cytoplasmic side of the membrane. A helical membrane pass occupies residues 83 to 103 (PQYFLDTNFLFLSGLIMASAI). Topologically, residues 104–137 (EEWNLHRRIALKILMLVGVQPARLILGMMVTTSF) are extracellular. The chain crosses the membrane as a helical span at residues 138–158 (LSMWLSNTASTAMMLPIANAI). The Cytoplasmic portion of the chain corresponds to 159–229 (LKSLFGQKEV…SRKEDEYRRN (71 aa)). Residues 230–250 (IWKGFLISIPYSASIGGTATL) form a helical membrane-spanning segment. At 251–278 (TGTAPNLILLGQLKSFFPQCDVVNFGSW) the chain is on the extracellular side. A helical transmembrane segment spans residues 279–299 (FIFAFPLMLLFLLAGWLWISF). Over 300–336 (LYGGLSFRGWRKNKSEIRTNAEDRARAVIREEYQNLG) the chain is Cytoplasmic. The helical transmembrane segment at 337-357 (PIKFAEQAVFILFCMFAILLF) threads the bilayer. Over 358–372 (TRDPKFIPGWASLFN) the chain is Extracellular. A helical membrane pass occupies residues 373–393 (PGFLSDAVTGVAIVTILFFFP). Topologically, residues 394–422 (SQRPSLKWWFDFKAPNTETEPLLTWKKAQ) are cytoplasmic. The helical intramembrane region spans 423–443 (ETVPWNIILLLGGGFAMAKGC). Residues 444–461 (EESGLSVWIGGQLHPLEN) lie on the Cytoplasmic side of the membrane. A helical transmembrane segment spans residues 462-482 (VPPALAVLLITVVIAFFTEFA). The Extracellular portion of the chain corresponds to 483–505 (SNTATIIIFLPVLAELAIRLRVH). Residues 506–526 (PLYLMIPGTVGCSFAFMLPVS) form a helical membrane-spanning segment. The Cytoplasmic segment spans residues 527-546 (TPPNSIAFASGHLLVKDMVR). A helical transmembrane segment spans residues 547–567 (TGLLMNLMGVLLLSLAMNTWA). Residues 568–602 (QTIFQLGTFPDWADMYSVNVTALPPTLANDTFRTL) lie on the Extracellular side of the membrane. N-linked (GlcNAc...) asparagine glycosylation is found at asparagine 586 and asparagine 596.

It belongs to the SLC13A/DASS transporter (TC 2.A.47) family. NADC subfamily. Expression is highest in kidney. Detected in placenta, brain, liver and pancreas.

It is found in the cell membrane. It catalyses the reaction succinate(out) + 3 Na(+)(out) = succinate(in) + 3 Na(+)(in). The enzyme catalyses 2-oxoglutarate(out) + 3 Na(+)(out) = 2-oxoglutarate(in) + 3 Na(+)(in). It carries out the reaction N-acetyl-L-aspartate(out) + 3 Na(+)(out) = N-acetyl-L-aspartate(in) + 3 Na(+)(in). The catalysed reaction is glutarate(out) + 3 Na(+)(out) = glutarate(in) + 3 Na(+)(in). It catalyses the reaction fumarate(out) + 3 Na(+)(out) = fumarate(in) + 3 Na(+)(in). The enzyme catalyses malate(out) + 3 Na(+)(out) = malate(in) + 3 Na(+)(in). It carries out the reaction 2,2-dimethylsuccinate(out) + 3 Na(+)(out) = 2,2-dimethylsuccinate(in) + 3 Na(+)(in). The catalysed reaction is 2,3-dimethylsuccinate(out) + 3 Na(+)(out) = 2,3-dimethylsuccinate(in) + 3 Na(+)(in). It catalyses the reaction itaconate(out) + 3 Na(+)(out) = itaconate(in) + 3 Na(+)(in). With respect to regulation, li(+) decreases succinate transport in the presence of Na(+). Functionally, high-affinity sodium-dicarboxylate cotransporter that accepts a range of substrates with 4-6 carbon atoms, such as the citric acid cycle intermediates succinate and alpha-ketoglutarate (2-oxoglutarate), as well as other compounds including N-acetyl-L-aspartate. Transports the dicarboxylate into the cell with a probable stoichiometry of 3 Na(+) for 1 divalent dicarboxylate, rendering the process electrogenic. Can transport citrate in a Na(+)-dependent manner, recognizing the divalent form of citrate rather than the trivalent form which is normally found in blood. Imports itaconate in hepatocytes leading to activation of TFEB-dependent lysosomal biogenesis involved in antibacterial innate immune response. The polypeptide is Na(+)/dicarboxylate cotransporter 3 (SLC13A3) (Homo sapiens (Human)).